The following is a 157-amino-acid chain: Phosphopantetheine adenylyltransferase (157 aa).

Thr-10 provides a ligand contact to substrate. ATP is bound by residues 10–11 (TF) and His-18. Positions 42, 74, and 88 each coordinate substrate. ATP-binding positions include 89–91 (GLR), Glu-99, and 124–130 (NAFISSS).

It belongs to the bacterial CoaD family. Homohexamer. Mg(2+) serves as cofactor.

The protein localises to the cytoplasm. It catalyses the reaction (R)-4'-phosphopantetheine + ATP + H(+) = 3'-dephospho-CoA + diphosphate. It functions in the pathway cofactor biosynthesis; coenzyme A biosynthesis; CoA from (R)-pantothenate: step 4/5. In terms of biological role, reversibly transfers an adenylyl group from ATP to 4'-phosphopantetheine, yielding dephospho-CoA (dPCoA) and pyrophosphate. This is Phosphopantetheine adenylyltransferase from Helicobacter pylori (strain P12).